Consider the following 211-residue polypeptide: Thioredoxin domain-containing protein 9 homolog (211 aa).

A Thioredoxin domain is found at 68–178; it reads YSEIHSEKDF…LEERIARAQV (111 aa). The span at 184–203 shows a compositional bias: polar residues; sequence ESSSLKPKSTTQVRRNVRQS. A disordered region spans residues 184 to 211; sequence ESSSLKPKSTTQVRRNVRQSARSDSDSE.

The sequence is that of Thioredoxin domain-containing protein 9 homolog from Arabidopsis thaliana (Mouse-ear cress).